The sequence spans 173 residues: Large ribosomal subunit protein uL10 (173 aa).

The protein belongs to the universal ribosomal protein uL10 family. Part of the ribosomal stalk of the 50S ribosomal subunit. The N-terminus interacts with L11 and the large rRNA to form the base of the stalk. The C-terminus forms an elongated spine to which L12 dimers bind in a sequential fashion forming a multimeric L10(L12)X complex.

In terms of biological role, forms part of the ribosomal stalk, playing a central role in the interaction of the ribosome with GTP-bound translation factors. The sequence is that of Large ribosomal subunit protein uL10 from Thiobacillus denitrificans (strain ATCC 25259 / T1).